The chain runs to 64 residues: Small ribosomal subunit protein bS21 (64 aa).

The protein belongs to the bacterial ribosomal protein bS21 family.

In Pelagibacter ubique (strain HTCC1062), this protein is Small ribosomal subunit protein bS21.